Reading from the N-terminus, the 229-residue chain is Large ribosomal subunit protein uL1 (229 aa).

The protein belongs to the universal ribosomal protein uL1 family. Part of the 50S ribosomal subunit.

Its function is as follows. Binds directly to 23S rRNA. The L1 stalk is quite mobile in the ribosome, and is involved in E site tRNA release. Functionally, protein L1 is also a translational repressor protein, it controls the translation of the L11 operon by binding to its mRNA. The polypeptide is Large ribosomal subunit protein uL1 (Desulforamulus reducens (strain ATCC BAA-1160 / DSM 100696 / MI-1) (Desulfotomaculum reducens)).